The sequence spans 743 residues: Phosphoribosylformylglycinamidine synthase subunit PurL (743 aa).

The active site involves His50. ATP is bound by residues Tyr53 and Lys92. Glu94 is a Mg(2+) binding site. Substrate is bound by residues 95 to 98 (SHNH) and Arg117. His96 (proton acceptor) is an active-site residue. Asp118 is a Mg(2+) binding site. Residue Gln241 participates in substrate binding. Asp269 provides a ligand contact to Mg(2+). 313–315 (ESQ) contributes to the substrate binding site. The ATP site is built by Asp494 and Gly531. Asn532 is a Mg(2+) binding site. Substrate is bound at residue Ser534.

The protein belongs to the FGAMS family. In terms of assembly, monomer. Part of the FGAM synthase complex composed of 1 PurL, 1 PurQ and 2 PurS subunits.

The protein localises to the cytoplasm. It carries out the reaction N(2)-formyl-N(1)-(5-phospho-beta-D-ribosyl)glycinamide + L-glutamine + ATP + H2O = 2-formamido-N(1)-(5-O-phospho-beta-D-ribosyl)acetamidine + L-glutamate + ADP + phosphate + H(+). The protein operates within purine metabolism; IMP biosynthesis via de novo pathway; 5-amino-1-(5-phospho-D-ribosyl)imidazole from N(2)-formyl-N(1)-(5-phospho-D-ribosyl)glycinamide: step 1/2. In terms of biological role, part of the phosphoribosylformylglycinamidine synthase complex involved in the purines biosynthetic pathway. Catalyzes the ATP-dependent conversion of formylglycinamide ribonucleotide (FGAR) and glutamine to yield formylglycinamidine ribonucleotide (FGAM) and glutamate. The FGAM synthase complex is composed of three subunits. PurQ produces an ammonia molecule by converting glutamine to glutamate. PurL transfers the ammonia molecule to FGAR to form FGAM in an ATP-dependent manner. PurS interacts with PurQ and PurL and is thought to assist in the transfer of the ammonia molecule from PurQ to PurL. The chain is Phosphoribosylformylglycinamidine synthase subunit PurL from Rhizobium meliloti (strain 1021) (Ensifer meliloti).